Here is a 305-residue protein sequence, read N- to C-terminus: Sulfate adenylyltransferase subunit 2 (305 aa).

The protein belongs to the PAPS reductase family. CysD subfamily. Heterodimer composed of CysD, the smaller subunit, and CysN.

The catalysed reaction is sulfate + ATP + H(+) = adenosine 5'-phosphosulfate + diphosphate. The protein operates within sulfur metabolism; hydrogen sulfide biosynthesis; sulfite from sulfate: step 1/3. Functionally, with CysN forms the ATP sulfurylase (ATPS) that catalyzes the adenylation of sulfate producing adenosine 5'-phosphosulfate (APS) and diphosphate, the first enzymatic step in sulfur assimilation pathway. APS synthesis involves the formation of a high-energy phosphoric-sulfuric acid anhydride bond driven by GTP hydrolysis by CysN coupled to ATP hydrolysis by CysD. The sequence is that of Sulfate adenylyltransferase subunit 2 from Pseudomonas fluorescens (strain Pf0-1).